The chain runs to 347 residues: DNA-directed RNA polymerase subunit alpha (347 aa).

Positions 1–230 (MFKGFQKPKR…DHMTIFINFE (230 aa)) are alpha N-terminal domain (alpha-NTD). The interval 247–347 (MNEVLNRSVE…EDDGQDQIGE (101 aa)) is alpha C-terminal domain (alpha-CTD). A disordered region spans residues 320–347 (GRLVAPPPSAGGGPDFGPEDDGQDQIGE). Positions 336–347 (GPEDDGQDQIGE) are enriched in acidic residues.

The protein belongs to the RNA polymerase alpha chain family. As to quaternary structure, homodimer. The RNAP catalytic core consists of 2 alpha, 1 beta, 1 beta' and 1 omega subunit. When a sigma factor is associated with the core the holoenzyme is formed, which can initiate transcription.

It catalyses the reaction RNA(n) + a ribonucleoside 5'-triphosphate = RNA(n+1) + diphosphate. Its function is as follows. DNA-dependent RNA polymerase catalyzes the transcription of DNA into RNA using the four ribonucleoside triphosphates as substrates. The polypeptide is DNA-directed RNA polymerase subunit alpha (Solibacter usitatus (strain Ellin6076)).